Reading from the N-terminus, the 241-residue chain is Endothelial protein C receptor (241 aa).

An N-terminal signal peptide occupies residues 1 to 17; sequence MLTTLLPLLPLLLPGWA. Residues 18–212 are Extracellular-facing; sequence LCSQEASDGP…GSQTGRSYTS (195 aa). N-linked (GlcNAc...) asparagine glycosylation is found at Asn-49, Asn-66, Asn-138, and Asn-174. Disulfide bonds link Cys-120-Cys-188 and Cys-221-Cys-234. The helical transmembrane segment at 213–233 threads the bilayer; that stretch reads LVLGVLVGCFIVTGVAVGIFL. Over 234–241 the chain is Cytoplasmic; sequence CTGGRRRC.

Expressed in endothelial cells.

It localises to the membrane. Its function is as follows. Binds activated protein C. Enhances protein C activation by the thrombin-thrombomodulin complex; plays a role in the protein C pathway controlling blood coagulation. The protein is Endothelial protein C receptor (PROCR) of Bos taurus (Bovine).